A 473-amino-acid chain; its full sequence is Photosystem II CP43 reaction center protein (473 aa).

A propeptide spanning residues 1-14 is cleaved from the precursor; the sequence is MKILYSLRRFYHVE. N-acetylthreonine is present on T15. T15 is subject to Phosphothreonine. A run of 5 helical transmembrane segments spans residues 69-93, 134-155, 178-200, 255-275, and 291-312; these read LFEVAHFVPEKPMYEQGLILLPHLA, LLGPETLEESFPFFGYVWKDRN, KALYFGGVYDTWAPGGGDVRKIT, KPFAWARRAFVWSGEAYLSYS, and WFNNTAYPSEFYGPTGPEASQA. Residue E367 coordinates [CaMn4O5] cluster. The helical transmembrane segment at 447–471 threads the bilayer; sequence RARAAAAGFEKGIDRDLEPVLYMTP.

The protein belongs to the PsbB/PsbC family. PsbC subfamily. In terms of assembly, PSII is composed of 1 copy each of membrane proteins PsbA, PsbB, PsbC, PsbD, PsbE, PsbF, PsbH, PsbI, PsbJ, PsbK, PsbL, PsbM, PsbT, PsbX, PsbY, PsbZ, Psb30/Ycf12, at least 3 peripheral proteins of the oxygen-evolving complex and a large number of cofactors. It forms dimeric complexes. It depends on Binds multiple chlorophylls and provides some of the ligands for the Ca-4Mn-5O cluster of the oxygen-evolving complex. It may also provide a ligand for a Cl- that is required for oxygen evolution. PSII binds additional chlorophylls, carotenoids and specific lipids. as a cofactor.

The protein resides in the plastid. It localises to the chloroplast thylakoid membrane. One of the components of the core complex of photosystem II (PSII). It binds chlorophyll and helps catalyze the primary light-induced photochemical processes of PSII. PSII is a light-driven water:plastoquinone oxidoreductase, using light energy to abstract electrons from H(2)O, generating O(2) and a proton gradient subsequently used for ATP formation. The protein is Photosystem II CP43 reaction center protein of Sorghum bicolor (Sorghum).